Consider the following 302-residue polypeptide: uncharacterized protein (302 aa).

Transmembrane regions (helical) follow at residues 3 to 23 (ILGV…SDWF), 39 to 59 (FVIG…LTSA), 77 to 97 (SCIC…PIIV), 106 to 126 (LVYL…FSWI), 128 to 148 (GVVL…NGSA), 163 to 183 (FSLV…ELFV), 199 to 219 (VIGF…VSLA), 227 to 247 (GMVL…ALAV), and 254 to 274 (LPAE…LYLF).

This sequence belongs to the Ca(2+):cation antiporter (CaCA) (TC 2.A.19) family.

Its subcellular location is the cell membrane. This is an uncharacterized protein from Methanocaldococcus jannaschii (strain ATCC 43067 / DSM 2661 / JAL-1 / JCM 10045 / NBRC 100440) (Methanococcus jannaschii).